A 209-amino-acid polypeptide reads, in one-letter code: Thymidine kinase (209 aa).

Residues 9–16 and 88–91 each bind ATP; these read SAMNAGKT and DEAQ. The active-site Proton acceptor is E89.

Belongs to the thymidine kinase family. Homotetramer.

Its subcellular location is the cytoplasm. The enzyme catalyses thymidine + ATP = dTMP + ADP + H(+). This is Thymidine kinase from Xanthomonas axonopodis pv. citri (strain 306).